The chain runs to 1029 residues: Myosin phosphatase Rho-interacting protein (1029 aa).

Positions 1–387 are interaction with F-actin; the sequence is MSAAKENPCR…DRRSTESSMT (387 aa). The PH 1 domain occupies 43 to 150; the sequence is KPIYGGWLLL…WLEMLMVYPR (108 aa). The tract at residues 152 to 267 is disordered; the sequence is NKQNQKKKRK…GDRVDGGRKV (116 aa). Residues 179–195 are compositionally biased toward low complexity; the sequence is SSSGGSSGSSSSSSSSS. Phosphoserine is present on residues Ser-198, Ser-224, Ser-226, Ser-230, and Ser-232. Residues 226–237 are compositionally biased toward low complexity; the sequence is SPVQSPSQSQPP. The segment covering 245-267 has biased composition (basic and acidic residues); sequence TGLDSKEDENILSGDRVDGGRKV. A phosphoserine mark is found at Ser-271, Ser-275, Ser-294, and Ser-297. Disordered regions lie at residues 279 to 306 and 333 to 383; these read AKQD…SRRS and PSSD…RSTE. Phosphothreonine is present on Thr-300. A compositionally biased stretch (basic and acidic residues) spans 338–354; the sequence is RQGRSERRAIPRKRDFA. The residue at position 369 (Ser-369) is a Phosphoserine. The region spanning 391–487 is the PH 2 domain; it reads LNFKKGWLTK…WIQTIMKHVL (97 aa). The segment at 490–614 is disordered; that stretch reads SAPDVTSSLP…NDGPGMEDTA (125 aa). Residues 492 to 509 show a composition bias toward polar residues; the sequence is PDVTSSLPEGKNKSTSFD. Ser-497 is subject to Phosphoserine. The segment covering 527–550 has biased composition (basic and acidic residues); sequence PEQKKSRARERRREGRSKTFDWAE. Residues 550-828 are interaction with RHOA; sequence EFRPIQQALA…SVQRELEVLS (279 aa). A compositionally biased stretch (polar residues) spans 562–571; that stretch reads RASTVGSSDS. Over residues 583 to 592 the composition is skewed to basic and acidic residues; sequence ELERERARRR. The residue at position 622 (Ser-622) is a Phosphoserine. Thr-650 bears the Phosphothreonine mark. The stretch at 675–979 forms a coiled coil; sequence STHELTSLLE…LKAATEALGE (305 aa). Residue Ser-804 is modified to Phosphoserine. The interaction with PPP1R12A stretch occupies residues 828-883; sequence SEQYSQKCLENAHLAQALEAERQALRQCQRENQELNAHNQELNNRLAAEITRLRTL. Residues Ser-981, Ser-997, Ser-1018, and Ser-1020 each carry the phosphoserine modification.

As to quaternary structure, binds RHOA, PPP1R12A/MBS and PPP1R12C/MBS85 through adjacent coiled coil domains. Interacts with MYZAP. Binds F-actin through its N-terminus.

Its subcellular location is the cytoplasm. The protein resides in the cytoskeleton. Targets myosin phosphatase to the actin cytoskeleton. Required for the regulation of the actin cytoskeleton by RhoA and ROCK1. Depletion leads to an increased number of stress fibers in smooth muscle cells through stabilization of actin fibers by phosphorylated myosin. Overexpression of MRIP as well as its F-actin-binding region leads to disassembly of stress fibers in neuronal cells. The sequence is that of Myosin phosphatase Rho-interacting protein (Mprip) from Rattus norvegicus (Rat).